A 475-amino-acid polypeptide reads, in one-letter code: Glutamate--tRNA ligase (475 aa).

Residues 11–21 (PSPTGFLHIGG) carry the 'HIGH' region motif. The 'KMSKS' region signature appears at 240–244 (KLSKR). An ATP-binding site is contributed by Lys243.

The protein belongs to the class-I aminoacyl-tRNA synthetase family. Glutamate--tRNA ligase type 1 subfamily. Monomer.

The protein localises to the cytoplasm. The enzyme catalyses tRNA(Glu) + L-glutamate + ATP = L-glutamyl-tRNA(Glu) + AMP + diphosphate. Its function is as follows. Catalyzes the attachment of glutamate to tRNA(Glu) in a two-step reaction: glutamate is first activated by ATP to form Glu-AMP and then transferred to the acceptor end of tRNA(Glu). The sequence is that of Glutamate--tRNA ligase from Bradyrhizobium diazoefficiens (strain JCM 10833 / BCRC 13528 / IAM 13628 / NBRC 14792 / USDA 110).